Reading from the N-terminus, the 314-residue chain is DNA-directed RNA polymerase subunit alpha (314 aa).

The tract at residues 1 to 228 (MIEIEKPRIE…EHLNIFVGLT (228 aa)) is alpha N-terminal domain (alpha-NTD). The alpha C-terminal domain (alpha-CTD) stretch occupies residues 245 to 314 (KEKVLEMSIE…DLGLGLRKED (70 aa)).

Belongs to the RNA polymerase alpha chain family. In terms of assembly, homodimer. The RNAP catalytic core consists of 2 alpha, 1 beta, 1 beta' and 1 omega subunit. When a sigma factor is associated with the core the holoenzyme is formed, which can initiate transcription.

It catalyses the reaction RNA(n) + a ribonucleoside 5'-triphosphate = RNA(n+1) + diphosphate. Functionally, DNA-dependent RNA polymerase catalyzes the transcription of DNA into RNA using the four ribonucleoside triphosphates as substrates. The sequence is that of DNA-directed RNA polymerase subunit alpha from Staphylococcus saprophyticus subsp. saprophyticus (strain ATCC 15305 / DSM 20229 / NCIMB 8711 / NCTC 7292 / S-41).